Here is an 87-residue protein sequence, read N- to C-terminus: U24 protein (87 aa).

The residue at position 6 (threonine 6) is a Phosphothreonine. A PPXY motif motif is present at residues 8 to 11 (PPSY). A helical membrane pass occupies residues 59–79 (FLVLTGLAIAMILFIVFVLYV).

Interacts with host ITCH; this interaction probably mediates ITCH degradation. Interacts probably with NEDD4.

The protein resides in the membrane. Functionally, down-regulates the TCR/CD3E complex and the transferrin receptor TFRC in host T-cells by blocking them from recycling back to the cell surface. In Homo sapiens (Human), this protein is U24 protein (U24).